The primary structure comprises 153 residues: SsrA-binding protein (153 aa).

Belongs to the SmpB family.

It localises to the cytoplasm. Required for rescue of stalled ribosomes mediated by trans-translation. Binds to transfer-messenger RNA (tmRNA), required for stable association of tmRNA with ribosomes. tmRNA and SmpB together mimic tRNA shape, replacing the anticodon stem-loop with SmpB. tmRNA is encoded by the ssrA gene; the 2 termini fold to resemble tRNA(Ala) and it encodes a 'tag peptide', a short internal open reading frame. During trans-translation Ala-aminoacylated tmRNA acts like a tRNA, entering the A-site of stalled ribosomes, displacing the stalled mRNA. The ribosome then switches to translate the ORF on the tmRNA; the nascent peptide is terminated with the 'tag peptide' encoded by the tmRNA and targeted for degradation. The ribosome is freed to recommence translation, which seems to be the essential function of trans-translation. The chain is SsrA-binding protein from Orientia tsutsugamushi (strain Ikeda) (Rickettsia tsutsugamushi).